We begin with the raw amino-acid sequence, 800 residues long: DEP domain-containing protein 1A (800 aa).

In terms of domain architecture, DEP spans 24-108; the sequence is FRAGMPLKKH…DNSQLYRFPS (85 aa). 3 disordered regions span residues 147–173, 306–326, and 459–485; these read ETLE…RSRE, SQPG…AKNP, and INTS…ARAR. The Rho-GAP domain maps to 281–321; the sequence is PLLTYQYYELFVNILVMCGYITTPKSQPGKRKNQEEPNCPQ. Residues 459–468 show a composition bias toward low complexity; sequence INTSGSSVSS.

This is DEP domain-containing protein 1A (depdc1a) from Danio rerio (Zebrafish).